A 216-amino-acid chain; its full sequence is Fibroblast growth factor 17 (216 aa).

Residues 1–22 (MGAARLLPNLTLCLQLLILCCQ) form the signal peptide. N-linked (GlcNAc...) asparagine glycosylation is present at asparagine 137. Positions 190 to 216 (EKQKQFEFVGSAPTRRTKRTRRPQPLT) are disordered. Basic residues predominate over residues 204-216 (RRTKRTRRPQPLT).

It belongs to the heparin-binding growth factors family. Interacts with FGFR3 and FGFR4. Preferentially expressed in the embryonic brain.

Its subcellular location is the secreted. Its function is as follows. Plays an important role in the regulation of embryonic development and as signaling molecule in the induction and patterning of the embryonic brain. Required for normal brain development. This is Fibroblast growth factor 17 (FGF17) from Homo sapiens (Human).